The chain runs to 273 residues: Tyrosinase (273 aa).

The Cu cation site is built by histidine 38, histidine 54, histidine 63, histidine 190, histidine 194, and histidine 216.

Belongs to the tyrosinase family. Cu(2+) is required as a cofactor.

It catalyses the reaction 2 L-dopa + O2 = 2 L-dopaquinone + 2 H2O. The catalysed reaction is L-tyrosine + O2 = L-dopaquinone + H2O. Functionally, this is a copper-containing oxidase that functions in the formation of pigments such as melanins and other polyphenolic compounds. The protein is Tyrosinase (melC2) of Streptomyces antibioticus.